A 552-amino-acid chain; its full sequence is Thermosome subunit beta (552 aa).

The protein belongs to the TCP-1 chaperonin family. As to quaternary structure, forms a Heterooligomeric complex of two stacked nine-membered rings; one of alpha and the other of beta subunits. Post-translationally, the N-terminus is blocked.

Functionally, molecular chaperone; binds unfolded polypeptides in vitro, and has a weak ATPase activity. The polypeptide is Thermosome subunit beta (thsB) (Sulfurisphaera tokodaii (strain DSM 16993 / JCM 10545 / NBRC 100140 / 7) (Sulfolobus tokodaii)).